A 356-amino-acid polypeptide reads, in one-letter code: Nuclear hormone receptor family member nhr-169 (356 aa).

A DNA-binding region (nuclear receptor) is located at residues 16 to 90 (DPICSVCNFS…AGMKRSLVKE (75 aa)). 2 NR C4-type zinc fingers span residues 19-40 (CSVC…CSAC) and 56-72 (CKKD…CRAC). In terms of domain architecture, NR LBD spans 144-356 (DVSKILKTTP…KLYLHMGLPF (213 aa)).

This sequence belongs to the nuclear hormone receptor family.

It is found in the nucleus. In terms of biological role, orphan nuclear receptor. The polypeptide is Nuclear hormone receptor family member nhr-169 (nhr-169) (Caenorhabditis elegans).